Reading from the N-terminus, the 80-residue chain is Defensin-like protein 2 (80 aa).

Positions 1–29 (MAKFASIIVLLFVALVVFAAFEEPTMVEA) are cleaved as a signal peptide. The residue at position 30 (Q30) is a Pyrrolidone carboxylic acid. 4 cysteine pairs are disulfide-bonded: C33–C80, C44–C65, C50–C74, and C54–C76.

Belongs to the DEFL family.

It is found in the secreted. Possesses antifungal activity sensitive to inorganic cations. Induces potential changes in fungal membranes and increased K(+) efflux and Ca(2+) uptake. This chain is Defensin-like protein 2 (AFP2), found in Raphanus sativus (Radish).